A 686-amino-acid chain; its full sequence is Methionine--tRNA ligase (686 aa).

The 'HIGH' region signature appears at 15–25; that stretch reads PYANGSIHLGH. Zn(2+) is bound by residues Cys146, Cys149, Cys159, and Cys162. A 'KMSKS' region motif is present at residues 332–336; that stretch reads KMSKS. Lys335 serves as a coordination point for ATP. The interval 550 to 571 is disordered; sequence AAAEAAAKEKAEAEKEQASQTE. The 102-residue stretch at 585–686 folds into the tRNA-binding domain; the sequence is AFSAVDMRIA…EGAQPGMRVM (102 aa).

Belongs to the class-I aminoacyl-tRNA synthetase family. MetG type 1 subfamily. In terms of assembly, homodimer. It depends on Zn(2+) as a cofactor.

It localises to the cytoplasm. The enzyme catalyses tRNA(Met) + L-methionine + ATP = L-methionyl-tRNA(Met) + AMP + diphosphate. Is required not only for elongation of protein synthesis but also for the initiation of all mRNA translation through initiator tRNA(fMet) aminoacylation. This chain is Methionine--tRNA ligase, found in Vibrio atlanticus (strain LGP32) (Vibrio splendidus (strain Mel32)).